The primary structure comprises 913 residues: MLGNIIKKAFGTRNERLLKGYSKIVSRINALEPEIQALSDADLRAKTDEFKKRLVDGEGLDALLPEAFAVVRETSVRTLGLRHFDVQIIGGLALHGGKIAEMRTGEGKTLGATMPAYLNALTGKGVHIVTVNDYLAKRDAEWMKPIYEFLGLTVGVNVPGMEPVEKQAAYAADITYGTNNEFGFDYLRDNMVFDLDQRVQRPLHYAIIDEVDSILIDEARTPLIISGQAEESSDLYVKINKFIPQLKLQKMEEGQKEEEVPPENRGDYTLDEKNRQAYLTEQGHRTIEALMIKQGLMQAGESLYDVSNISLMHYVYAALRAHTLFYRDVHYIVKNNEVIIVDEHTGRLMPGRRWSDGLHQAVEAKEGATIQLENQTLATITFQNYFRLYEKLSGMTATADTEAFELQKIYGLEVVVIPTNRPMIRRDESDQVYLTADAKFDAIVNEVKKRHEKGQPLLIGTASIEASELVARFLKKANIKHEILNAKNHEREAKIIAEAGRPGAVTIATNMAGRGTDIVLGGNLEAEMSELDNLAEEEIQKRKADWQKRHDAVIAAGGLHVLGTERHESRRIDNQLRGRSGRQGDPGSSQFYLSMEDNLLRIFAAERMSNMMRRLGVKEDDVIEHPWITRAIEKAQRRVEGMNFDIRKQLLEYDDVANDQRKVIYQQRFQLLQTDDISETIEAIREEAVSEMISSFVPPQSLEEEWDIPGLEKQIREDFGLALPIAQWLEKDETLHEETLHKRIIDEITKAYKAKEAKADPKAMREVEKTLMLQLLDHHWKEHLAAMDHLRQGIHLRGYAQKNPAQEYKRESFELFTQMLKRIKYELAATLSKLEIATEEQVAQQQRLYQQSAPELQYHHAEMTALQPEKEVAVAEQEEATQPFVRSQPKVGRNESCPCGSGKKYKQCHGKLS.

Residues Q87, G105–T109, and D517 each bind ATP. Disordered regions lie at residues E568–S588 and E871–S913. Positions 897, 899, 908, and 909 each coordinate Zn(2+). Residues K903–S913 show a composition bias toward basic residues.

This sequence belongs to the SecA family. In terms of assembly, monomer and homodimer. Part of the essential Sec protein translocation apparatus which comprises SecA, SecYEG and auxiliary proteins SecDF-YajC and YidC. Zn(2+) is required as a cofactor.

Its subcellular location is the cell inner membrane. The protein localises to the cytoplasm. It carries out the reaction ATP + H2O + cellular proteinSide 1 = ADP + phosphate + cellular proteinSide 2.. In terms of biological role, part of the Sec protein translocase complex. Interacts with the SecYEG preprotein conducting channel. Has a central role in coupling the hydrolysis of ATP to the transfer of proteins into and across the cell membrane, serving both as a receptor for the preprotein-SecB complex and as an ATP-driven molecular motor driving the stepwise translocation of polypeptide chains across the membrane. This is Protein translocase subunit SecA from Coxiella burnetii (strain RSA 493 / Nine Mile phase I).